The sequence spans 542 residues: Chaperonin GroEL (542 aa).

Residues 29-32 (TLGP), Lys-50, 86-90 (DGTTT), Gly-413, 477-479 (NAA), and Asp-493 each bind ATP.

This sequence belongs to the chaperonin (HSP60) family. Forms a cylinder of 14 subunits composed of two heptameric rings stacked back-to-back. Interacts with the co-chaperonin GroES.

It is found in the cytoplasm. It catalyses the reaction ATP + H2O + a folded polypeptide = ADP + phosphate + an unfolded polypeptide.. Together with its co-chaperonin GroES, plays an essential role in assisting protein folding. The GroEL-GroES system forms a nano-cage that allows encapsulation of the non-native substrate proteins and provides a physical environment optimized to promote and accelerate protein folding. This Solibacter usitatus (strain Ellin6076) protein is Chaperonin GroEL.